Reading from the N-terminus, the 980-residue chain is Chitin binding domain containing chtb-2 (980 aa).

An N-terminal signal peptide occupies residues 1 to 20 (MRTMHCFLFILLFCLGQVFT). Residues Asn187 and Asn190 are each glycosylated (N-linked (GlcNAc...) asparagine). Disordered regions lie at residues 310 to 354 (ERQQ…AELD), 431 to 451 (QEEERQRKIQQQKVEMEQIRQ), and 486 to 512 (EILRQQEEDQKKKKLEKDREQREQQEA). 2 N-linked (GlcNAc...) asparagine glycosylation sites follow: Asn941 and Asn975.

The protein is Chitin binding domain containing chtb-2 of Caenorhabditis elegans.